A 184-amino-acid polypeptide reads, in one-letter code: Large ribosomal subunit protein uL5 (184 aa).

It belongs to the universal ribosomal protein uL5 family. As to quaternary structure, part of the 50S ribosomal subunit; part of the 5S rRNA/L5/L18/L25 subcomplex. Contacts the 5S rRNA and the P site tRNA. Forms a bridge to the 30S subunit in the 70S ribosome.

Functionally, this is one of the proteins that bind and probably mediate the attachment of the 5S RNA into the large ribosomal subunit, where it forms part of the central protuberance. In the 70S ribosome it contacts protein S13 of the 30S subunit (bridge B1b), connecting the 2 subunits; this bridge is implicated in subunit movement. Contacts the P site tRNA; the 5S rRNA and some of its associated proteins might help stabilize positioning of ribosome-bound tRNAs. This chain is Large ribosomal subunit protein uL5, found in Ureaplasma urealyticum serovar 10 (strain ATCC 33699 / Western).